The following is a 316-amino-acid chain: tRNA-cytidine(32) 2-sulfurtransferase (316 aa).

Positions S45–S50 match the PP-loop motif motif. The [4Fe-4S] cluster site is built by C120, C123, and C211.

Belongs to the TtcA family. Homodimer. Mg(2+) is required as a cofactor. The cofactor is [4Fe-4S] cluster.

The protein localises to the cytoplasm. It carries out the reaction cytidine(32) in tRNA + S-sulfanyl-L-cysteinyl-[cysteine desulfurase] + AH2 + ATP = 2-thiocytidine(32) in tRNA + L-cysteinyl-[cysteine desulfurase] + A + AMP + diphosphate + H(+). The protein operates within tRNA modification. Its function is as follows. Catalyzes the ATP-dependent 2-thiolation of cytidine in position 32 of tRNA, to form 2-thiocytidine (s(2)C32). The sulfur atoms are provided by the cysteine/cysteine desulfurase (IscS) system. This Shewanella sediminis (strain HAW-EB3) protein is tRNA-cytidine(32) 2-sulfurtransferase.